A 74-amino-acid chain; its full sequence is UPF0435 protein GTNG_0390 (74 aa).

The protein belongs to the UPF0435 family.

This is UPF0435 protein GTNG_0390 from Geobacillus thermodenitrificans (strain NG80-2).